The following is a 390-amino-acid chain: Pyruvate dehydrogenase E1 component subunit alpha, somatic form, mitochondrial (390 aa).

A mitochondrion-targeting transit peptide spans 1–29; that stretch reads MRKMLAAVSRVLSGASQKPASRVLVASRN. Lys-63 carries the N6-acetyllysine; alternate modification. The residue at position 63 (Lys-63) is an N6-succinyllysine; alternate. Pyruvate contacts are provided by His-92, Tyr-118, Arg-119, Ala-157, Gly-165, Val-167, Asp-196, Gly-197, Ala-198, Asn-225, and Tyr-227. The thiamine diphosphate site is built by Tyr-118 and Arg-119. Thiamine diphosphate-binding residues include Gly-165, Val-167, Asp-196, Gly-197, Ala-198, and Asn-225. Residue Asp-196 coordinates Mg(2+). Residues Asn-225 and Tyr-227 each coordinate Mg(2+). Ser-232 is subject to Phosphoserine; by PDK1. Lys-244 bears the N6-acetyllysine; alternate mark. Lys-244 bears the N6-succinyllysine; alternate mark. Lys-277 carries the N6-succinyllysine modification. His-292 contacts thiamine diphosphate. Ser-293 bears the Phosphoserine; by PDK1, PDK2, PDK3 and PDK4 mark. Ser-295 is subject to Phosphoserine. Residue Ser-300 is modified to Phosphoserine; by PDK1, PDK2, PDK3 and PDK4. Residue Tyr-301 is modified to Phosphotyrosine. Lys-313 bears the N6-acetyllysine; alternate mark. At Lys-313 the chain carries N6-succinyllysine; alternate. An N6-acetyllysine mark is found at Lys-321 and Lys-336. Residue Lys-385 is modified to N6-succinyllysine.

In terms of assembly, heterotetramer of two PDHA1 and two PDHB subunits. The heterotetramer interacts with DLAT, and is part of the multimeric pyruvate dehydrogenase complex that contains multiple copies of pyruvate dehydrogenase (E1), dihydrolipoamide acetyltransferase (DLAT, E2) and lipoamide dehydrogenase (DLD, E3). These subunits are bound to an inner core composed of about 48 DLAT and 12 PDHX molecules. Thiamine diphosphate serves as cofactor. The cofactor is Mg(2+). Post-translationally, phosphorylation at Ser-232, Ser-293 and Ser-300 by PDK family kinases inactivates the enzyme; for this phosphorylation at a single site is sufficient. Phosphorylation at Ser-293 interferes with access to active site, and thereby inactivates the enzyme. Dephosphorylation at all three sites, i.e. at Ser-232, Ser-293 and Ser-300, is required for reactivation. Acetylation alters the phosphorylation pattern. Deacetylated by SIRT3.

It is found in the mitochondrion matrix. The enzyme catalyses N(6)-[(R)-lipoyl]-L-lysyl-[protein] + pyruvate + H(+) = N(6)-[(R)-S(8)-acetyldihydrolipoyl]-L-lysyl-[protein] + CO2. Its activity is regulated as follows. Pyruvate dehydrogenase activity is inhibited by phosphorylation of PDHA1; it is reactivated by dephosphorylation. The pyruvate dehydrogenase complex catalyzes the overall conversion of pyruvate to acetyl-CoA and CO(2), and thereby links the glycolytic pathway to the tricarboxylic cycle. This Macaca fascicularis (Crab-eating macaque) protein is Pyruvate dehydrogenase E1 component subunit alpha, somatic form, mitochondrial (PDHA1).